Here is a 342-residue protein sequence, read N- to C-terminus: Tetraacyldisaccharide 4'-kinase (342 aa).

Thr-68 to Thr-75 lines the ATP pocket.

This sequence belongs to the LpxK family.

It catalyses the reaction a lipid A disaccharide + ATP = a lipid IVA + ADP + H(+). The protein operates within glycolipid biosynthesis; lipid IV(A) biosynthesis; lipid IV(A) from (3R)-3-hydroxytetradecanoyl-[acyl-carrier-protein] and UDP-N-acetyl-alpha-D-glucosamine: step 6/6. Its function is as follows. Transfers the gamma-phosphate of ATP to the 4'-position of a tetraacyldisaccharide 1-phosphate intermediate (termed DS-1-P) to form tetraacyldisaccharide 1,4'-bis-phosphate (lipid IVA). The polypeptide is Tetraacyldisaccharide 4'-kinase (Burkholderia cenocepacia (strain ATCC BAA-245 / DSM 16553 / LMG 16656 / NCTC 13227 / J2315 / CF5610) (Burkholderia cepacia (strain J2315))).